Consider the following 238-residue polypeptide: EKC/KEOPS complex subunit SPAP27G11.07c (238 aa).

The Protein kinase domain maps to 20–238 (EKKLTVVKQG…MRGRKRTMIG (219 aa)). ATP-binding positions include 26 to 34 (VKQGAEAIT) and Lys48. The active-site Proton acceptor is Asp148.

The protein belongs to the protein kinase superfamily. BUD32 family. In terms of assembly, component of the EKC/KEOPS complex composed of at least SPAP27G11.07c/BUD32, cgi121, gon7, pgp2 and SPAC4H3.13/PCC1; the whole complex dimerizes.

The protein resides in the cytoplasm. Its subcellular location is the nucleus. The protein localises to the chromosome. It is found in the telomere. It carries out the reaction L-seryl-[protein] + ATP = O-phospho-L-seryl-[protein] + ADP + H(+). It catalyses the reaction L-threonyl-[protein] + ATP = O-phospho-L-threonyl-[protein] + ADP + H(+). Its function is as follows. Component of the EKC/KEOPS complex that is required for the formation of a threonylcarbamoyl group on adenosine at position 37 (t(6)A37) in tRNAs that read codons beginning with adenine. The complex is probably involved in the transfer of the threonylcarbamoyl moiety of threonylcarbamoyl-AMP (TC-AMP) to the N6 group of A37. BUD32 has ATPase activity in the context of the EKC/KEOPS complex and likely plays a supporting role to the catalytic subunit KAE1. The EKC/KEOPS complex also promotes both telomere uncapping and telomere elongation. The complex is required for efficient recruitment of transcriptional coactivators. The polypeptide is EKC/KEOPS complex subunit SPAP27G11.07c (Schizosaccharomyces pombe (strain 972 / ATCC 24843) (Fission yeast)).